Consider the following 642-residue polypeptide: Threonine--tRNA ligase (642 aa).

One can recognise a TGS domain in the interval 1–61; it reads MPIITLPDGS…EEDASLEIIT (61 aa). Positions 244-535 are catalytic; sequence DHRKIGKQLD…LIEEYAGFFP (292 aa). Zn(2+) contacts are provided by Cys-335, His-386, and His-512.

The protein belongs to the class-II aminoacyl-tRNA synthetase family. In terms of assembly, homodimer. Requires Zn(2+) as cofactor.

Its subcellular location is the cytoplasm. The enzyme catalyses tRNA(Thr) + L-threonine + ATP = L-threonyl-tRNA(Thr) + AMP + diphosphate + H(+). In terms of biological role, catalyzes the attachment of threonine to tRNA(Thr) in a two-step reaction: L-threonine is first activated by ATP to form Thr-AMP and then transferred to the acceptor end of tRNA(Thr). Also edits incorrectly charged L-seryl-tRNA(Thr). The protein is Threonine--tRNA ligase of Vibrio vulnificus (strain CMCP6).